Here is a 549-residue protein sequence, read N- to C-terminus: Oxygen-dependent choline dehydrogenase (549 aa).

Residue 4-33 (DFVIIGSGSAGSALAYRLSEDGKNSVLVIE) coordinates FAD. The Proton acceptor role is filled by histidine 465. Positions 530–549 (PLARSNQEPWINPRAAVSDR) are disordered.

Belongs to the GMC oxidoreductase family. FAD serves as cofactor.

It carries out the reaction choline + A = betaine aldehyde + AH2. The catalysed reaction is betaine aldehyde + NAD(+) + H2O = glycine betaine + NADH + 2 H(+). It participates in amine and polyamine biosynthesis; betaine biosynthesis via choline pathway; betaine aldehyde from choline (cytochrome c reductase route): step 1/1. Its function is as follows. Involved in the biosynthesis of the osmoprotectant glycine betaine. Catalyzes the oxidation of choline to betaine aldehyde and betaine aldehyde to glycine betaine at the same rate. In Rhizobium etli (strain ATCC 51251 / DSM 11541 / JCM 21823 / NBRC 15573 / CFN 42), this protein is Oxygen-dependent choline dehydrogenase.